We begin with the raw amino-acid sequence, 546 residues long: Chaperonin GroEL 2 (546 aa).

ATP-binding positions include 30–33 (TLGP), Lys-51, 87–91 (DGTTT), Gly-415, and Asp-495.

It belongs to the chaperonin (HSP60) family. In terms of assembly, forms a cylinder of 14 subunits composed of two heptameric rings stacked back-to-back. Interacts with the co-chaperonin GroES.

The protein localises to the cytoplasm. It carries out the reaction ATP + H2O + a folded polypeptide = ADP + phosphate + an unfolded polypeptide.. Functionally, together with its co-chaperonin GroES, plays an essential role in assisting protein folding. The GroEL-GroES system forms a nano-cage that allows encapsulation of the non-native substrate proteins and provides a physical environment optimized to promote and accelerate protein folding. The chain is Chaperonin GroEL 2 from Burkholderia cenocepacia (strain HI2424).